A 405-amino-acid polypeptide reads, in one-letter code: MADVNKVVLAYSGGLDTSVILKWLQDTYNCEVVTFTADLGQGEEVEPARAKAQAMGVKEIYIDDLREEFVRDFVFPMFRANTVYEGEYLLGTSIARPLIAKRLIEIANETGADAISHGATGKGNDQVRFELGAYALKPGVKVIAPWREWDLLSREKLMDYAEKHAIPIERHGKKKSPYSMDANLLHISYEGGVLEDTWTEHEEDMWRWTVSPEKAPDTPQYLELTYRNGDIVALDGVEMTPATVLATLNRIGGEHGIGRLDIVENRYVGMKSRGCYETPGGTIMLRAHRAIESITLDREVAHLKDELMPKYASLIYTGYWWSPERLMLQQMIDASQVNVNGVVRLKLYKGNVIVTGRKSDDSLFDANIATFEEDGGAYNQADAAGFIKLNALRMRIAANKGRKLF.

Residues 10–18 (AYSGGLDTS) and Ala-37 each bind ATP. The L-citrulline site is built by Tyr-88 and Ser-93. Residue Gly-118 coordinates ATP. Thr-120, Asn-124, and Asp-125 together coordinate L-aspartate. Asn-124 lines the L-citrulline pocket. L-citrulline is bound by residues Arg-128, Ser-179, Ser-188, Glu-264, and Tyr-276.

This sequence belongs to the argininosuccinate synthase family. Type 1 subfamily. Homotetramer.

It localises to the cytoplasm. The catalysed reaction is L-citrulline + L-aspartate + ATP = 2-(N(omega)-L-arginino)succinate + AMP + diphosphate + H(+). It participates in amino-acid biosynthesis; L-arginine biosynthesis; L-arginine from L-ornithine and carbamoyl phosphate: step 2/3. This chain is Argininosuccinate synthase, found in Pseudomonas fluorescens (strain Pf0-1).